The following is a 687-amino-acid chain: MPRSTSDRFRWSPLSLAIACTLSLAVQAADTSSTQTNSKKRIADTMVVTATGNERSSFEAPMMVTVVEADTPTSETATSATDMLRNIPGLTVTGSGRVNGQDVTLRGYGKQGVLTLVDGIRQGTDTGHLNSTFLDPALVKRVEIVRGPSALLYGSGALGGVISYETVDAADLLLPGQNSGYRVYSAAATGDHSFGLGASAFGRTDDVDGILSFGTRDIGNIRQSDGFNAPNDETISNVLAKGTWRIDQIQSLSANLRYYNNSALEPKNPQTSAASSTNLMTDRSTIQRDAQLKYNIKPLDQEWLNATAQVYYSEVEINARPQGTPEEGRKQTTKGGKLENRTRLFTDSFASHLLTYGTEAYKQEQTPSGATESFPQADIRFGSGWLQDEITLRDLPVSILAGTRYDNYRGSSEGYADVDADKWSSRGAVSVTPTDWLMLFGSYAQAFRAPTMGEMYNDSKHFSMNIMGNTLTNYWVPNPNLKPETNETQEYGFGLRFNDLMMAEDDLQFKASYFDTNAKDYISTGVTMDFGFGPGGLYCKNCSTYSTNIDRAKIWGWDATMTYQTQWFNLGLAYNRTRGKNQNTNEWLDTINPDTVTSTLDVPVANSGFAVGWIGTFADRSSRVSSSGTPQAGYGVNDFYVSYKGQEQFKGMTTTVVLGNAFDKGYYGPQGVPQDGRNAKFFVSYQW.

The signal sequence occupies residues 1-28 (MPRSTSDRFRWSPLSLAIACTLSLAVQA). Residues 44 to 51 (DTMVVTAT) carry the TonB box motif. Positions 56–167 (SSFEAPMMVT…LGGVISYETV (112 aa)) constitute a TBDR plug domain. The region spanning 178–687 (NSGYRVYSAA…NAKFFVSYQW (510 aa)) is the TBDR beta-barrel domain. The interval 319–338 (ARPQGTPEEGRKQTTKGGKL) is disordered. Basic and acidic residues predominate over residues 326-338 (EEGRKQTTKGGKL). The TonB C-terminal box signature appears at 670-687 (QGVPQDGRNAKFFVSYQW).

It belongs to the TonB-dependent receptor family.

The protein resides in the cell outer membrane. Its function is as follows. This protein is involved in the initial step of iron uptake by binding hemin, an iron chelatin siderophore that allows the bacteria to extract iron from the environment. This is Hemin receptor (hemR) from Yersinia enterocolitica.